Reading from the N-terminus, the 1029-residue chain is Protein translocase subunit SecA (1029 aa).

Residues Gln-143, 161–165 (GEGKT), and Asp-661 each bind ATP. The disordered stretch occupies residues 953 to 1029 (EQEQKKSQVQ…GKKYKNCCGK (77 aa)). Basic and acidic residues-rich tracts occupy residues 966–975 (LVARHEKAET) and 984–996 (PEGR…ENGK). Residues Cys-1015, Cys-1017, Cys-1026, and Cys-1027 each coordinate Zn(2+).

Belongs to the SecA family. In terms of assembly, monomer and homodimer. Part of the essential Sec protein translocation apparatus which comprises SecA, SecYEG and auxiliary proteins SecDF. Other proteins may also be involved. Requires Zn(2+) as cofactor.

The protein resides in the cell inner membrane. The protein localises to the cytoplasm. The enzyme catalyses ATP + H2O + cellular proteinSide 1 = ADP + phosphate + cellular proteinSide 2.. Functionally, part of the Sec protein translocase complex. Interacts with the SecYEG preprotein conducting channel. Has a central role in coupling the hydrolysis of ATP to the transfer of proteins into and across the cell membrane, serving as an ATP-driven molecular motor driving the stepwise translocation of polypeptide chains across the membrane. The polypeptide is Protein translocase subunit SecA (Chlorobium phaeobacteroides (strain BS1)).